The chain runs to 115 residues: Holo-[acyl-carrier-protein] synthase (115 aa).

Positions 6 and 51 each coordinate Mg(2+).

This sequence belongs to the P-Pant transferase superfamily. AcpS family. The cofactor is Mg(2+).

It localises to the cytoplasm. It catalyses the reaction apo-[ACP] + CoA = holo-[ACP] + adenosine 3',5'-bisphosphate + H(+). In terms of biological role, transfers the 4'-phosphopantetheine moiety from coenzyme A to a Ser of acyl-carrier-protein. In Campylobacter jejuni (strain RM1221), this protein is Holo-[acyl-carrier-protein] synthase.